The following is a 316-amino-acid chain: Epoxide hydrolase 2 (316 aa).

Residues 25-302 (PAVLFLHGFP…AAHFINQERP (278 aa)) enclose the AB hydrolase-1 domain. The active-site Nucleophile is the D101. Y150 is an an epoxide binding site. Y230 serves as the catalytic Proton donor. H295 functions as the Proton acceptor in the catalytic mechanism.

Belongs to the AB hydrolase superfamily. Epoxide hydrolase family. As to quaternary structure, homodimer. In terms of tissue distribution, highly expressed in young fruits 15 days after anthesis (15-DAA). Also observed in stems and leaves.

It catalyses the reaction an epoxide + H2O = an ethanediol. The catalysed reaction is (24S)-24,25-epoxycucurbitadienol + H2O = (24R)-24,25-dihydroxycucurbitadienol. The protein operates within secondary metabolite biosynthesis; terpenoid biosynthesis. In terms of biological role, epoxide hydrolase involved in the biosynthesis of cucurbitacin and mogroside tetracyclic triterpene natural products (e.g. siamenoside I and mogrosides IV, V and VI). Cucurbitacins have cytotoxic properties and exhibit deterrent taste as a defense barrier against herbivores. Mogrosides are nonsugar highly oxygenated compounds used as high-intensity zero-calorie sweeteners; they also possess pharmacological properties such as regulating immunity, lowering blood sugar and lipid levels, protecting the liver, and acting as antioxidants and antitumor agents. Catalyzes the hydrolysis of aromatic epoxide-containing substrates, such as the conversion of 24,25-epoxycucurbitadienol to 24,25-dihydroxycucurbitadienol. This is Epoxide hydrolase 2 from Siraitia grosvenorii (Monk's fruit).